We begin with the raw amino-acid sequence, 101 residues long: Apolipoprotein C-II (101 aa).

The signal sequence occupies residues 1–22 (MGTRFLLALCLVLLVLGFEVQG). The lipid binding stretch occupies residues 66–74 (AVDEKLRDL). Residues 78 to 101 (STAAMSTYTGIFTDQVLSVLKGEE) form a lipoprotein lipase cofactor region.

It belongs to the apolipoprotein C2 family. Proapolipoprotein C-II is synthesized as a sialic acid containing glycoprotein which is subsequently desialylated prior to its proteolytic processing. In terms of processing, proapolipoprotein C-II, the major form found in plasma undergoes proteolytic cleavage of its N-terminal hexapeptide to generate apolipoprotein C-II, which occurs as the minor form in plasma.

The protein localises to the secreted. Its function is as follows. Component of chylomicrons, very low-density lipoproteins (VLDL), low-density lipoproteins (LDL), and high-density lipoproteins (HDL) in plasma. Plays an important role in lipoprotein metabolism as an activator of lipoprotein lipase. Both proapolipoprotein C-II and apolipoprotein C-II can activate lipoprotein lipase. This is Apolipoprotein C-II (APOC2) from Macaca fascicularis (Crab-eating macaque).